The chain runs to 117 residues: Ribulose bisphosphate carboxylase small subunit 1 (117 aa).

It belongs to the RuBisCO small chain family. In terms of assembly, heterohexadecamer of 8 large and 8 small subunits.

Functionally, ruBisCO catalyzes two reactions: the carboxylation of D-ribulose 1,5-bisphosphate, the primary event in carbon dioxide fixation, as well as the oxidative fragmentation of the pentose substrate. Both reactions occur simultaneously and in competition at the same active site. Although the small subunit is not catalytic it is essential for maximal activity. In Hydrogenovibrio marinus, this protein is Ribulose bisphosphate carboxylase small subunit 1.